A 313-amino-acid chain; its full sequence is Porphobilinogen deaminase (313 aa).

Cysteine 242 carries the S-(dipyrrolylmethanemethyl)cysteine modification.

The protein belongs to the HMBS family. As to quaternary structure, monomer. Requires dipyrromethane as cofactor.

It carries out the reaction 4 porphobilinogen + H2O = hydroxymethylbilane + 4 NH4(+). Its pathway is porphyrin-containing compound metabolism; protoporphyrin-IX biosynthesis; coproporphyrinogen-III from 5-aminolevulinate: step 2/4. Functionally, tetrapolymerization of the monopyrrole PBG into the hydroxymethylbilane pre-uroporphyrinogen in several discrete steps. The polypeptide is Porphobilinogen deaminase (Pseudomonas entomophila (strain L48)).